Reading from the N-terminus, the 269-residue chain is Aminodeoxychorismate lyase (269 aa).

Position 140 is an N6-(pyridoxal phosphate)lysine (lysine 140).

It belongs to the class-IV pyridoxal-phosphate-dependent aminotransferase family. Homodimer. Pyridoxal 5'-phosphate is required as a cofactor.

It carries out the reaction 4-amino-4-deoxychorismate = 4-aminobenzoate + pyruvate + H(+). Its pathway is cofactor biosynthesis; tetrahydrofolate biosynthesis; 4-aminobenzoate from chorismate: step 2/2. Involved in the biosynthesis of p-aminobenzoate (PABA), a precursor of tetrahydrofolate. Converts 4-amino-4-deoxychorismate into 4-aminobenzoate (PABA) and pyruvate. The polypeptide is Aminodeoxychorismate lyase (pabC) (Escherichia coli (strain K12)).